The primary structure comprises 396 residues: Ribosomal RNA large subunit methyltransferase I (396 aa).

Residues 2–81 enclose the PUA domain; the sequence is TVSIYLAKGR…EAIDKDFFVR (80 aa).

The protein belongs to the methyltransferase superfamily. RlmI family.

The protein resides in the cytoplasm. The catalysed reaction is cytidine(1962) in 23S rRNA + S-adenosyl-L-methionine = 5-methylcytidine(1962) in 23S rRNA + S-adenosyl-L-homocysteine + H(+). Functionally, specifically methylates the cytosine at position 1962 (m5C1962) of 23S rRNA. The protein is Ribosomal RNA large subunit methyltransferase I of Aliivibrio fischeri (strain ATCC 700601 / ES114) (Vibrio fischeri).